We begin with the raw amino-acid sequence, 444 residues long: Phosphoglucosamine mutase (444 aa).

Ser-102 serves as the catalytic Phosphoserine intermediate. Residues Ser-102, Asp-241, Asp-243, and Asp-245 each coordinate Mg(2+). The residue at position 102 (Ser-102) is a Phosphoserine.

Belongs to the phosphohexose mutase family. It depends on Mg(2+) as a cofactor. Activated by phosphorylation.

It catalyses the reaction alpha-D-glucosamine 1-phosphate = D-glucosamine 6-phosphate. Functionally, catalyzes the conversion of glucosamine-6-phosphate to glucosamine-1-phosphate. The polypeptide is Phosphoglucosamine mutase (Haemophilus ducreyi (strain 35000HP / ATCC 700724)).